We begin with the raw amino-acid sequence, 321 residues long: Methenyltetrahydromethanopterin cyclohydrolase (321 aa).

Belongs to the MCH family.

The protein resides in the cytoplasm. The catalysed reaction is 5,10-methenyl-5,6,7,8-tetrahydromethanopterin + H2O = N(5)-formyl-5,6,7,8-tetrahydromethanopterin + H(+). It functions in the pathway one-carbon metabolism; methanogenesis from CO(2); 5,10-methenyl-5,6,7,8-tetrahydromethanopterin from CO(2): step 3/3. Its function is as follows. Catalyzes the reversible interconversion of 5-formyl-H(4)MPT to methenyl-H(4)MPT(+). In Methanosarcina mazei (strain ATCC BAA-159 / DSM 3647 / Goe1 / Go1 / JCM 11833 / OCM 88) (Methanosarcina frisia), this protein is Methenyltetrahydromethanopterin cyclohydrolase.